Here is a 375-residue protein sequence, read N- to C-terminus: D-alanine--D-alanine ligase (375 aa).

In terms of domain architecture, ATP-grasp spans 145 to 348; that stretch reads KRLLRDADLE…YPALITRLIE (204 aa). 175–230 contacts ATP; sequence ITYLGSSLFVKPANQGSSVGVSKVINRISFDQALALAFCFDDKVLVESAINGRELE. Mg(2+)-binding residues include aspartate 302, glutamate 315, and asparagine 317.

This sequence belongs to the D-alanine--D-alanine ligase family. Mg(2+) serves as cofactor. It depends on Mn(2+) as a cofactor.

It is found in the cytoplasm. It catalyses the reaction 2 D-alanine + ATP = D-alanyl-D-alanine + ADP + phosphate + H(+). It participates in cell wall biogenesis; peptidoglycan biosynthesis. Cell wall formation. This is D-alanine--D-alanine ligase from Baumannia cicadellinicola subsp. Homalodisca coagulata.